A 338-amino-acid chain; its full sequence is uncharacterized protein (338 aa).

A disordered region spans residues 1–20 (MYNNNQNHHNNDNNMNKDEP). Residues 9–20 (HNNDNNMNKDEP) are compositionally biased toward basic and acidic residues. Asn37, Asn83, Asn97, Asn105, Asn114, and Asn122 each carry an N-linked (GlcNAc...) asparagine glycan. Positions 55–92 (VNSGNNNNNNNNNNNNNNNNNNNNNNNNNDSIVINMDT) are disordered. Low complexity predominate over residues 59–92 (NNNNNNNNNNNNNNNNNNNNNNNNNDSIVINMDT). 3 helical membrane passes run 148 to 168 (YKKF…IVLI), 178 to 198 (FHAY…FLLI), and 202 to 222 (ILSI…FLKV). N-linked (GlcNAc...) asparagine glycans are attached at residues Asn229, Asn240, Asn286, Asn302, Asn317, and Asn322. Disordered stretches follow at residues 279–303 (SNLN…NSNS) and 316–338 (LNSS…TNEE). A compositionally biased stretch (low complexity) spans 280–294 (NLNRNNNNSNNVNNN). The segment covering 316-327 (LNSSGSNSSIYS) has biased composition (low complexity). A compositionally biased stretch (polar residues) spans 328-338 (DVQNDIGTNEE).

The protein resides in the membrane. This is an uncharacterized protein from Dictyostelium discoideum (Social amoeba).